The following is a 2415-amino-acid chain: Spectrin alpha chain, erythrocytic 1 (2415 aa).

Spectrin repeat units lie at residues 52 to 152 (YHYQ…SDVL), 157 to 259 (KFYQ…ESLS), 263 to 365 (DLQR…AKLK), 370 to 471 (YHRF…HQYR), 475 to 576 (DFHL…RKLL), 580 to 681 (QLLQ…GTQL), 686 to 787 (QLLQ…KKKL), 792 to 894 (KLQQ…NDLK), and 898 to 967 (QLQQ…QQQQ). At S257 the chain carries Phosphoserine. An SH3 domain is found at 975-1034 (GREARVIALYDFEARSRREVSMKKNDVLTLLSSINKDWWKVEADDHQGFVPAVYVRKLAP). Residue S990 is modified to Phosphoserine. Spectrin repeat units lie at residues 1085 to 1177 (LAYE…YQLL), 1183 to 1285 (VEMF…SLNE), 1287 to 1390 (HKFF…KMLD), 1394 to 1489 (ELQL…QLLT), 1499 to 1603 (DLKQ…KLNE), 1606 to 1709 (RQQR…KLKE), 1712 to 1815 (ALFQ…NLEE), 1818 to 1921 (EYLQ…SQLD), 1924 to 2029 (HAFQ…KLLE), 2040 to 2142 (LFME…QELQ), and 2154 to 2254 (MCQE…NLEQ). S1972 bears the Phosphoserine mark. EF-hand domains are found at residues 2267 to 2302 (ETLK…LNYY), 2310 to 2345 (EPEP…KESE), and 2347 to 2382 (IKTS…EQVS). The Ca(2+) site is built by D2280, N2282, T2284, R2286, E2291, D2323, Y2329, and D2334.

Belongs to the spectrin family. In terms of assembly, composed of non-homologous chains, alpha and beta, which aggregate to form dimers, tetramers, and higher polymers. Interacts with FASLG. Interacts with BCAM.

The protein localises to the cytoplasm. The protein resides in the cytoskeleton. Its subcellular location is the cell cortex. Its function is as follows. Spectrin is the major constituent of the cytoskeletal network underlying the erythrocyte plasma membrane. It associates with band 4.1 and actin to form the cytoskeletal superstructure of the erythrocyte plasma membrane. This chain is Spectrin alpha chain, erythrocytic 1 (Spta1), found in Mus musculus (Mouse).